The sequence spans 130 residues: Large ribosomal subunit protein bL17 (130 aa).

The protein belongs to the bacterial ribosomal protein bL17 family. Part of the 50S ribosomal subunit. Contacts protein L32.

This Nitrosomonas europaea (strain ATCC 19718 / CIP 103999 / KCTC 2705 / NBRC 14298) protein is Large ribosomal subunit protein bL17.